The primary structure comprises 443 residues: MEPTFDIPDSTDWLDTPLTLLAPFETSLRCQVCKDFFDNPVITSCSHTFCSLCIRRCLSTEGKCPTCRSSDQELKLRRNWVVQELVEGFKNARPSILQLARMAQTGTDDSGDLAAEEPASKKRKIEPNAIVGTDGLPEEGIRTRSQSRGASRQPQATPVQVIDDGNDEDYMPDGLVPCPVCGRRMKEEAVFRHLDSCTGTAEELKPAAFGSLAPGPRKSFLAATGKPPERLPVINYSLLKDTVLRKKLKDLGIPNWGPRALLQRRHTEWLNLWNANCDSRTPKPKRELLRELDVWERTQGGNSVTPTDPTNAVMNKDFNTEEWSANYDTDFKALIANARKKNDAVIRSTIPNASQANSDTPRSAQLVDQPIEASLTPQDVDEKSTMNPQDAIDNRTEVPPVPDPPQALSGIDRAVNSPMKNVTEGDAQAIPISSSASTHKTPH.

Residues 30–68 (CQVCKDFFDNPVITSCSHTFCSLCIRRCLSTEGKCPTCR) form an RING-type zinc finger. Residues 106–157 (GTDDSGDLAAEEPASKKRKIEPNAIVGTDGLPEEGIRTRSQSRGASRQPQAT) form a disordered region. Positions 143-157 (TRSQSRGASRQPQAT) are enriched in polar residues. The UBZ4-type zinc-finger motif lies at 175–202 (LVPCPVCGRRMKEEAVFRHLDSCTGTAE). Zn(2+) contacts are provided by Cys178, Cys181, His193, and Cys197. The SAP domain maps to 239 to 273 (LKDTVLRKKLKDLGIPNWGPRALLQRRHTEWLNLW). 2 stretches are compositionally biased toward polar residues: residues 350–363 (IPNA…TPRS) and 431–443 (PISS…KTPH). The interval 350–443 (IPNASQANSD…SSASTHKTPH (94 aa)) is disordered.

Belongs to the RAD18 family. In terms of assembly, interacts with E2 UBC2, forming a complex with ubiquitin ligase activity.

The protein resides in the nucleus. The enzyme catalyses S-ubiquitinyl-[E2 ubiquitin-conjugating enzyme]-L-cysteine + [acceptor protein]-L-lysine = [E2 ubiquitin-conjugating enzyme]-L-cysteine + N(6)-ubiquitinyl-[acceptor protein]-L-lysine.. The protein operates within protein modification; protein ubiquitination. Its function is as follows. E3 RING-finger protein, member of the UBC2/RAD6 epistasis group. Associates to the E2 ubiquitin conjugating enzyme UBC2/RAD6 to form the UBC2-RAD18 ubiquitin ligase complex involved in postreplicative repair (PRR) of damaged DNA. This chain is Postreplication repair E3 ubiquitin-protein ligase rad18 (uvsH), found in Emericella nidulans (strain FGSC A4 / ATCC 38163 / CBS 112.46 / NRRL 194 / M139) (Aspergillus nidulans).